An 818-amino-acid chain; its full sequence is LisH domain-containing protein ARMC9 (818 aa).

One can recognise a LisH domain in the interval 7-39; sequence HESELLGLVKEYLDFAEFEDTLKTFSKECKIKG. Residues 204–230 are a coiled coil; the sequence is QSNKEILQQLHQQLVEAERRSVTYLKR. Serine 582 carries the phosphoserine modification. Disordered regions lie at residues 642 to 755 and 790 to 818; these read VQWS…TTRE and SSCG…SHRK. Over residues 701-711 the composition is skewed to low complexity; that stretch reads STPESCVSSSS. A compositionally biased stretch (polar residues) spans 792–818; sequence CGPQQASRPGSTASSTRGLPSSQSHRK.

In terms of assembly, interacts with TOGARAM1, CCDC66, CEP104, CSPP1 and CEP290. Interacts with NDUFAF2. In terms of tissue distribution, strongly expressed in most melanomas and melanocytes. Weakly expressed in the testis.

The protein localises to the cytoplasm. It localises to the cytoskeleton. The protein resides in the cilium basal body. Its subcellular location is the cell projection. It is found in the cilium. The protein localises to the microtubule organizing center. It localises to the centrosome. The protein resides in the centriole. Its function is as follows. Involved in ciliogenesis. It is required for appropriate acetylation and polyglutamylation of ciliary microtubules, and regulation of cilium length. Acts as a positive regulator of hedgehog (Hh)signaling. May participate in the trafficking and/or retention of GLI2 and GLI3 proteins at the ciliary tip. In Homo sapiens (Human), this protein is LisH domain-containing protein ARMC9.